A 261-amino-acid chain; its full sequence is Ribosomal RNA small subunit methyltransferase A (261 aa).

6 residues coordinate S-adenosyl-L-methionine: Asn-15, Ile-17, Gly-42, Glu-64, Asp-90, and Asn-109.

Belongs to the class I-like SAM-binding methyltransferase superfamily. rRNA adenine N(6)-methyltransferase family. RsmA subfamily.

The protein localises to the cytoplasm. The enzyme catalyses adenosine(1518)/adenosine(1519) in 16S rRNA + 4 S-adenosyl-L-methionine = N(6)-dimethyladenosine(1518)/N(6)-dimethyladenosine(1519) in 16S rRNA + 4 S-adenosyl-L-homocysteine + 4 H(+). Its function is as follows. Specifically dimethylates two adjacent adenosines (A1518 and A1519) in the loop of a conserved hairpin near the 3'-end of 16S rRNA in the 30S particle. May play a critical role in biogenesis of 30S subunits. The sequence is that of Ribosomal RNA small subunit methyltransferase A from Wolbachia sp. subsp. Brugia malayi (strain TRS).